The chain runs to 815 residues: Serotype-specific mannosyltransferase WbdA (815 aa).

Residues methionine 1 to aspartate 374 are alpha-(1-&gt;2)-mannosyltransferase. The interval lysine 431–lysine 804 is alpha-(1-&gt;3)-mannosyltransferase.

This sequence belongs to the glycosyltransferase group 1 family. Glycosyltransferase 4 subfamily.

It localises to the cell inner membrane. Its pathway is bacterial outer membrane biogenesis; LPS O-antigen biosynthesis. Its function is as follows. Mannosyltransferase involved in the biosynthesis of the repeat unit of the lipopolysaccharide (LPS) O-antigen region. The chain is Serotype-specific mannosyltransferase WbdA from Escherichia coli.